We begin with the raw amino-acid sequence, 139 residues long: Protein FAM237B (139 aa).

A signal peptide spans 1–24 (MCFATRRWFYLHLGCMMLINLVNA). A Methionine amide modification is found at Met112. A propeptide spans 113-139 (GRRQVMPPKYNFPQKITGGNLNVYLRE) (removed in the mature form).

Post-translationally, the active form requires C-terminal amidation and disulfide bond formation.

The protein resides in the secreted. Its function is as follows. May be capable of activating GPR83 via the GNAQ signaling pathway. The sequence is that of Protein FAM237B from Homo sapiens (Human).